The chain runs to 65 residues: Large ribosomal subunit protein uL29 (65 aa).

It belongs to the universal ribosomal protein uL29 family.

The protein is Large ribosomal subunit protein uL29 of Leptothrix cholodnii (strain ATCC 51168 / LMG 8142 / SP-6) (Leptothrix discophora (strain SP-6)).